Here is a 3068-residue protein sequence, read N- to C-terminus: Genome polyprotein (3068 aa).

The 144-residue stretch at 144–287 folds into the Peptidase S30 domain; that stretch reads TFRDGHMNKF…MATVTHMEQY (144 aa). Active-site for P1 proteinase activity residues include H195, D204, and S238. The Involved in interaction with stylet and aphid transmission signature appears at 337–340; the sequence is KLTC. The Involved in virions binding and aphid transmission motif lies at 595-597; it reads PTK. A Peptidase C6 domain is found at 621–743; the sequence is LYIALDGYCY…ESEIKHYRVG (123 aa). Catalysis depends on for helper component proteinase activity residues C629 and H702. The region spanning 1228–1380 is the Helicase ATP-binding domain; the sequence is DISISSERDF…TQFPVKLVVE (153 aa). 1241 to 1248 lines the ATP pocket; sequence GAVGSGKS. A DECH box motif is present at residues 1330-1333; the sequence is DECH. In terms of domain architecture, Helicase C-terminal spans 1399 to 1558; that stretch reads DMIQYGNNLL…NLPVMSSGVS (160 aa). A Nuclear localization signal motif is present at residues 1884–1891; that stretch reads KKGKGKGT. The residue at position 1906 (Y1906) is an O-(5'-phospho-RNA)-tyrosine. The 219-residue stretch at 2031–2249 folds into the Peptidase C4 domain; it reads AKTLMRGLRD…VLWGPLQLTK (219 aa). Catalysis depends on for nuclear inclusion protein A activity residues H2076, D2111, and C2181. Residues 2518–2642 form the RdRp catalytic domain; that stretch reads WIYCDADGSQ…AVNPERESLL (125 aa). The interval 2796 to 2833 is disordered; that stretch reads SSSRSDTLDAGEEKKKNKEVATVSDGMGKKEVESTRDS. A compositionally biased stretch (basic and acidic residues) spans 2822 to 2833; that stretch reads MGKKEVESTRDS. Position 3051 is a phosphothreonine (T3051).

The protein belongs to the potyviridae genome polyprotein family. As to quaternary structure, interacts with host eIF4E protein (via cap-binding region); this interaction mediates the translation of the VPg-viral RNA conjugates. Part of a complex that comprises VPg, RNA, host EIF4E and EIF4G; this interaction mediates the translation of the VPg-viral RNA conjugates. In terms of processing, VPg is uridylylated by the polymerase and is covalently attached to the 5'-end of the genomic RNA. This uridylylated form acts as a nucleotide-peptide primer for the polymerase. Potyviral RNA is expressed as two polyproteins which undergo post-translational proteolytic processing. Genome polyprotein is processed by NIa-pro, P1 and HC-pro proteinases resulting in the production of at least ten individual proteins. P3N-PIPO polyprotein is cleaved by P1 and HC-pro proteinases resulting in the production of three individual proteins. The P1 proteinase and the HC-pro cleave only their respective C-termini autocatalytically. 6K1 is essential for proper proteolytic separation of P3 from CI.

It localises to the host cytoplasmic vesicle. The protein resides in the host nucleus. It is found in the virion. It carries out the reaction RNA(n) + a ribonucleoside 5'-triphosphate = RNA(n+1) + diphosphate. The catalysed reaction is Hydrolyzes glutaminyl bonds, and activity is further restricted by preferences for the amino acids in P6 - P1' that vary with the species of potyvirus, e.g. Glu-Xaa-Xaa-Tyr-Xaa-Gln-|-(Ser or Gly) for the enzyme from tobacco etch virus. The natural substrate is the viral polyprotein, but other proteins and oligopeptides containing the appropriate consensus sequence are also cleaved.. The enzyme catalyses Hydrolyzes a Gly-|-Gly bond at its own C-terminus, commonly in the sequence -Tyr-Xaa-Val-Gly-|-Gly, in the processing of the potyviral polyprotein.. In terms of biological role, required for aphid transmission and also has proteolytic activity. Only cleaves a Gly-Gly dipeptide at its own C-terminus. Interacts with virions and aphid stylets. Acts as a suppressor of RNA-mediated gene silencing, also known as post-transcriptional gene silencing (PTGS), a mechanism of plant viral defense that limits the accumulation of viral RNAs. May have RNA-binding activity. Functionally, has helicase activity. It may be involved in replication. Indispensable for virus replication. Reduces the abundance of host transcripts related to jasmonic acid biosynthesis therefore altering the host defenses. In order to increase its own stability, decreases host protein degradation pathways. Its function is as follows. Indispensable for virus replication. In terms of biological role, mediates the cap-independent, EIF4E-dependent translation of viral genomic RNAs. Binds to the cap-binding site of host EIF4E and thus interferes with the host EIF4E-dependent mRNA export and translation. VPg-RNA directly binds EIF4E and is a template for transcription. Also forms trimeric complexes with EIF4E-EIF4G, which are templates for translation. Functionally, has RNA-binding and proteolytic activities. An RNA-dependent RNA polymerase that plays an essential role in the virus replication. Its function is as follows. Involved in aphid transmission, cell-to-cell and systemis movement, encapsidation of the viral RNA and in the regulation of viral RNA amplification. The chain is Genome polyprotein from Pepper mottle virus (isolate California) (PeMV).